The chain runs to 251 residues: uncharacterized protein (251 aa).

5 helical membrane passes run 22–42, 86–106, 120–140, 157–177, and 205–225; these read FLGVIPLFFICFVFVIADIVI, FFLSAFAYIIFTFLGYNVILA, LASSVFLHVLAPIAFLVAGIV, LGYFMIYPLVYGLYLATIPYV, and IVAWPVVICFLFIYFPLSFLA.

The protein localises to the cell membrane. This is an uncharacterized protein from Mycoplasma pneumoniae (strain ATCC 29342 / M129 / Subtype 1) (Mycoplasmoides pneumoniae).